Reading from the N-terminus, the 227-residue chain is Isopentenyl-diphosphate Delta-isomerase 1 (227 aa).

Substrate is bound at residue Lys-36. Mg(2+) contacts are provided by His-40 and His-51. A Nudix hydrolase domain is found at 49–199; it reads LLHRAFSVFL…EIKLTPWFKI (151 aa). The substrate site is built by Arg-70 and Lys-74. Cys-86 is an active-site residue. Ser-87 lines the substrate pocket. 2 residues coordinate Mg(2+): Glu-146 and Glu-148. Glu-148 is a catalytic residue. Lys-176 is subject to N6-acetyllysine. A Microbody targeting signal motif is present at residues 225–227; the sequence is HRL.

Belongs to the IPP isomerase type 1 family. As to quaternary structure, monomer. The cofactor is Mg(2+).

The protein localises to the peroxisome. The catalysed reaction is isopentenyl diphosphate = dimethylallyl diphosphate. Its pathway is isoprenoid biosynthesis; dimethylallyl diphosphate biosynthesis; dimethylallyl diphosphate from isopentenyl diphosphate: step 1/1. Catalyzes the 1,3-allylic rearrangement of the homoallylic substrate isopentenyl (IPP) to its highly electrophilic allylic isomer, dimethylallyl diphosphate (DMAPP). This Mus musculus (Mouse) protein is Isopentenyl-diphosphate Delta-isomerase 1 (Idi1).